A 346-amino-acid polypeptide reads, in one-letter code: Probable disease resistance protein At5g45440 (346 aa).

Positions 38 to 116 constitute an NB-ARC domain; it reads KQVEDRVETD…AYAPRIWVSM (79 aa). Residue 85–92 participates in ATP binding; it reads GEYGVGKT. Residues 315–346 form a disordered region; it reads FDDGKANQNGSKDGKTDSVDNPNSEESKTKPL.

Functionally, possible disease resistance protein. The polypeptide is Probable disease resistance protein At5g45440 (Arabidopsis thaliana (Mouse-ear cress)).